A 1884-amino-acid chain; its full sequence is Fatty acid synthase subunit alpha (1884 aa).

Residues 91-141 form a disordered region; sequence TPDPAEPPAAEEPKAETGKESAPAASAAAAAATQPAAAVAPPPQSAGPVES. A compositionally biased stretch (low complexity) spans 111–129; sequence SAPAASAAAAAATQPAAAV. Positions 147–222 constitute a Carrier domain; sequence VKASLLIHVL…EQFQDTFSGS (76 aa). At S182 the chain carries O-(pantetheine 4'-phosphoryl)serine. The tract at residues 583–613 is disordered; it reads TEQTTQDALAIPTGSNTPTEEDELSTASDDD. The segment covering 584–600 has biased composition (polar residues); sequence EQTTQDALAIPTGSNTP. The span at 601-613 shows a compositional bias: acidic residues; sequence TEEDELSTASDDD. The beta-ketoacyl reductase stretch occupies residues 677–873; the sequence is DKYVLVTGAG…CGAIIGWTRG (197 aa). Residues 1120 to 1660 form the Ketosynthase family 3 (KS3) domain; it reads IQEVVIQHDL…QKGAQAVVVH (541 aa). Residues C1303, H1545, and H1586 each act as for beta-ketoacyl synthase activity in the active site. 3 residues coordinate Mg(2+): D1770, V1771, and E1772. Acetyl-CoA-binding positions include 1770-1772, Y1796, S1806, 1815-1825, 1839-1842, and 1869-1871; these read DVE, EATFKALGVSS, RDGN, and ISH. S1870 and H1871 together coordinate Mg(2+).

This sequence belongs to the thiolase-like superfamily. Fungal fatty acid synthetase subunit alpha family. Fatty acid synthase is composed of alpha and beta subunits.

The enzyme catalyses acetyl-CoA + n malonyl-CoA + 2n NADPH + 4n H(+) = a long-chain-acyl-CoA + n CoA + n CO2 + 2n NADP(+).. The catalysed reaction is a fatty acyl-[ACP] + malonyl-[ACP] + H(+) = a 3-oxoacyl-[ACP] + holo-[ACP] + CO2. It carries out the reaction a (3R)-hydroxyacyl-[ACP] + NADP(+) = a 3-oxoacyl-[ACP] + NADPH + H(+). Fatty acid synthetase catalyzes the formation of long-chain fatty acids from acetyl-CoA, malonyl-CoA and NADPH. The alpha subunit contains domains for: acyl carrier protein, 3-oxoacyl-[acyl-carrier-protein] reductase, and 3-oxoacyl-[acyl-carrier-protein] synthase. This Candida parapsilosis (strain CDC 317 / ATCC MYA-4646) (Yeast) protein is Fatty acid synthase subunit alpha (FAS2).